The primary structure comprises 301 residues: Aldose reductase (301 aa).

Residue 11 to 20 (GKEIPTVGLG) participates in NADP(+) binding. Catalysis depends on Tyr-51, which acts as the Proton donor. His-111 provides a ligand contact to substrate. Residue 209-266 (SSLGSAPGSSAKVRDDKTIKAIAKKYGCAPSQIILSYITAQGICVIPKSRSKEHLREN) participates in NADP(+) binding.

This sequence belongs to the aldo/keto reductase family.

Its subcellular location is the cytoplasm. The catalysed reaction is an alditol + NAD(+) = an aldose + NADH + H(+). It catalyses the reaction an alditol + NADP(+) = an aldose + NADPH + H(+). Its function is as follows. Catalyzes the NADPH-dependent reduction of a wide variety of carbonyl-containing compounds to their corresponding alcohols with a broad range of catalytic efficiencies. The chain is Aldose reductase from Encephalitozoon cuniculi (strain GB-M1) (Microsporidian parasite).